Consider the following 62-residue polypeptide: Metallothionein (62 aa).

Met1 carries the N-acetylmethionine modification. Positions Met1–Cys30 are beta. Positions 6, 8, 14, 16, 20, 22, 25, 27, 30, 34, 35, 37, 38, 42, 45, 49, 51, 58, 60, and 61 each coordinate a divalent metal cation. The tract at residues Lys31 to Asn62 is alpha.

The protein belongs to the metallothionein superfamily. Type 1 family.

In terms of biological role, metallothioneins have a high content of cysteine residues that bind various heavy metals. In Xenopus laevis (African clawed frog), this protein is Metallothionein (mt-a).